A 241-amino-acid polypeptide reads, in one-letter code: 1-(5-phosphoribosyl)-5-[(5-phosphoribosylamino)methylideneamino] imidazole-4-carboxamide isomerase (241 aa).

The active-site Proton acceptor is the Asp11. Asp130 serves as the catalytic Proton donor.

Belongs to the HisA/HisF family.

The protein resides in the cytoplasm. The enzyme catalyses 1-(5-phospho-beta-D-ribosyl)-5-[(5-phospho-beta-D-ribosylamino)methylideneamino]imidazole-4-carboxamide = 5-[(5-phospho-1-deoxy-D-ribulos-1-ylimino)methylamino]-1-(5-phospho-beta-D-ribosyl)imidazole-4-carboxamide. The protein operates within amino-acid biosynthesis; L-histidine biosynthesis; L-histidine from 5-phospho-alpha-D-ribose 1-diphosphate: step 4/9. The protein is 1-(5-phosphoribosyl)-5-[(5-phosphoribosylamino)methylideneamino] imidazole-4-carboxamide isomerase of Acidothermus cellulolyticus (strain ATCC 43068 / DSM 8971 / 11B).